Here is a 252-residue protein sequence, read N- to C-terminus: Ribonuclease 3 (252 aa).

The RNase III domain occupies 3–125; sequence LATLETRLDH…IFGAAFLDGG (123 aa). E38 is a binding site for Mg(2+). D42 is a catalytic residue. Mg(2+) contacts are provided by D111 and E114. Residue E114 is part of the active site. Residues 152 to 222 enclose the DRBM domain; that stretch reads DAKTLLQEFL…AKLALEAAQA (71 aa).

The protein belongs to the ribonuclease III family. Homodimer. Requires Mg(2+) as cofactor.

It localises to the cytoplasm. The enzyme catalyses Endonucleolytic cleavage to 5'-phosphomonoester.. Digests double-stranded RNA. Involved in the processing of primary rRNA transcript to yield the immediate precursors to the large and small rRNAs (23S and 16S). Processes some mRNAs, and tRNAs when they are encoded in the rRNA operon. Processes pre-crRNA and tracrRNA of type II CRISPR loci if present in the organism. This chain is Ribonuclease 3, found in Bordetella petrii (strain ATCC BAA-461 / DSM 12804 / CCUG 43448).